Reading from the N-terminus, the 158-residue chain is NAD(P)H-quinone oxidoreductase subunit J, chloroplastic (158 aa).

It belongs to the complex I 30 kDa subunit family. NDH is composed of at least 16 different subunits, 5 of which are encoded in the nucleus.

Its subcellular location is the plastid. It localises to the chloroplast thylakoid membrane. It catalyses the reaction a plastoquinone + NADH + (n+1) H(+)(in) = a plastoquinol + NAD(+) + n H(+)(out). The enzyme catalyses a plastoquinone + NADPH + (n+1) H(+)(in) = a plastoquinol + NADP(+) + n H(+)(out). NDH shuttles electrons from NAD(P)H:plastoquinone, via FMN and iron-sulfur (Fe-S) centers, to quinones in the photosynthetic chain and possibly in a chloroplast respiratory chain. The immediate electron acceptor for the enzyme in this species is believed to be plastoquinone. Couples the redox reaction to proton translocation, and thus conserves the redox energy in a proton gradient. The chain is NAD(P)H-quinone oxidoreductase subunit J, chloroplastic from Lactuca sativa (Garden lettuce).